The following is a 339-amino-acid chain: Holliday junction branch migration complex subunit RuvB (339 aa).

Residues Lys-2 to Tyr-187 are large ATPase domain (RuvB-L). ATP contacts are provided by residues Leu-26, Arg-27, Gly-68, Lys-71, Thr-72, Thr-73, Glu-134 to Phe-136, Arg-177, Tyr-187, and Arg-224. Mg(2+) is bound at residue Thr-72. Residues Ser-188–Glu-258 form a small ATPAse domain (RuvB-S) region. The interval Asp-261 to Lys-339 is head domain (RuvB-H). DNA is bound by residues Arg-316 and Arg-321.

Belongs to the RuvB family. As to quaternary structure, homohexamer. Forms an RuvA(8)-RuvB(12)-Holliday junction (HJ) complex. HJ DNA is sandwiched between 2 RuvA tetramers; dsDNA enters through RuvA and exits via RuvB. An RuvB hexamer assembles on each DNA strand where it exits the tetramer. Each RuvB hexamer is contacted by two RuvA subunits (via domain III) on 2 adjacent RuvB subunits; this complex drives branch migration. In the full resolvosome a probable DNA-RuvA(4)-RuvB(12)-RuvC(2) complex forms which resolves the HJ.

The protein localises to the cytoplasm. It carries out the reaction ATP + H2O = ADP + phosphate + H(+). Functionally, the RuvA-RuvB-RuvC complex processes Holliday junction (HJ) DNA during genetic recombination and DNA repair, while the RuvA-RuvB complex plays an important role in the rescue of blocked DNA replication forks via replication fork reversal (RFR). RuvA specifically binds to HJ cruciform DNA, conferring on it an open structure. The RuvB hexamer acts as an ATP-dependent pump, pulling dsDNA into and through the RuvAB complex. RuvB forms 2 homohexamers on either side of HJ DNA bound by 1 or 2 RuvA tetramers; 4 subunits per hexamer contact DNA at a time. Coordinated motions by a converter formed by DNA-disengaged RuvB subunits stimulates ATP hydrolysis and nucleotide exchange. Immobilization of the converter enables RuvB to convert the ATP-contained energy into a lever motion, pulling 2 nucleotides of DNA out of the RuvA tetramer per ATP hydrolyzed, thus driving DNA branch migration. The RuvB motors rotate together with the DNA substrate, which together with the progressing nucleotide cycle form the mechanistic basis for DNA recombination by continuous HJ branch migration. Branch migration allows RuvC to scan DNA until it finds its consensus sequence, where it cleaves and resolves cruciform DNA. This chain is Holliday junction branch migration complex subunit RuvB, found in Lactobacillus johnsonii (strain CNCM I-12250 / La1 / NCC 533).